Consider the following 856-residue polypeptide: Probable alpha,alpha-trehalose-phosphate synthase [UDP-forming] 8 (856 aa).

A Phosphoserine modification is found at Ser-5. Thr-32 carries the post-translational modification Phosphothreonine. Residues 57–541 (ERKIIVANML…AKSFMQDLER (485 aa)) form a glycosyltransferase region.

In the N-terminal section; belongs to the glycosyltransferase 20 family. It in the C-terminal section; belongs to the trehalose phosphatase family. Expressed in leaves, roots, stems and flowers.

It catalyses the reaction D-glucose 6-phosphate + UDP-alpha-D-glucose = alpha,alpha-trehalose 6-phosphate + UDP + H(+). This chain is Probable alpha,alpha-trehalose-phosphate synthase [UDP-forming] 8 (TPS8), found in Arabidopsis thaliana (Mouse-ear cress).